The primary structure comprises 503 residues: Probable cytosol aminopeptidase (503 aa).

Positions 270 and 275 each coordinate Mn(2+). Residue lysine 282 is part of the active site. Mn(2+) is bound by residues aspartate 293, aspartate 352, and glutamate 354. The active site involves arginine 356.

The protein belongs to the peptidase M17 family. Mn(2+) is required as a cofactor.

The protein localises to the cytoplasm. It catalyses the reaction Release of an N-terminal amino acid, Xaa-|-Yaa-, in which Xaa is preferably Leu, but may be other amino acids including Pro although not Arg or Lys, and Yaa may be Pro. Amino acid amides and methyl esters are also readily hydrolyzed, but rates on arylamides are exceedingly low.. It carries out the reaction Release of an N-terminal amino acid, preferentially leucine, but not glutamic or aspartic acids.. In terms of biological role, presumably involved in the processing and regular turnover of intracellular proteins. Catalyzes the removal of unsubstituted N-terminal amino acids from various peptides. This is Probable cytosol aminopeptidase from Shigella boydii serotype 4 (strain Sb227).